The following is an 89-amino-acid chain: Small ribosomal subunit protein uS19 (89 aa).

Belongs to the universal ribosomal protein uS19 family.

In terms of biological role, protein S19 forms a complex with S13 that binds strongly to the 16S ribosomal RNA. The protein is Small ribosomal subunit protein uS19 of Ruthia magnifica subsp. Calyptogena magnifica.